A 302-amino-acid polypeptide reads, in one-letter code: MSVPDAAVVKAFLLDLQNRICAGLQALDGQARFAADSWTRAEGGGGTSRVLTQGAVFEQAGVNFSHVTGAAMPASATAHRPELAGRSFEAMGVSLVIHPNNPYIPTTHANVRFFIAQKEGADPVWWFGGGFDLTPYYPFEEDVREWHQTSKDICAPFGDEVYPKYKKWCDEYFFLPHRNETRGVGGLFFDDLNQAGFEQSFSFMQAVGNGFLTAYAPIVERRKDTEFGERERQFQLYRRGRYVEFNLVYDRGTLFGLQTGGRTESILMSMPPLVRWQYAYTPEAGSPEADLYDNYLKPRDWV.

Residue serine 94 coordinates substrate. A divalent metal cation contacts are provided by histidine 98 and histidine 108. Catalysis depends on histidine 108, which acts as the Proton donor. 110–112 contributes to the substrate binding site; sequence NVR. Histidine 147 and histidine 177 together coordinate a divalent metal cation. Positions 242-277 are important for dimerization; sequence YVEFNLVYDRGTLFGLQTGGRTESILMSMPPLVRWQ. 260 to 262 lines the substrate pocket; sequence GGR.

This sequence belongs to the aerobic coproporphyrinogen-III oxidase family. As to quaternary structure, homodimer. It depends on a divalent metal cation as a cofactor.

It localises to the cytoplasm. It catalyses the reaction coproporphyrinogen III + O2 + 2 H(+) = protoporphyrinogen IX + 2 CO2 + 2 H2O. Its pathway is porphyrin-containing compound metabolism; protoporphyrin-IX biosynthesis; protoporphyrinogen-IX from coproporphyrinogen-III (O2 route): step 1/1. Involved in the heme biosynthesis. Catalyzes the aerobic oxidative decarboxylation of propionate groups of rings A and B of coproporphyrinogen-III to yield the vinyl groups in protoporphyrinogen-IX. The sequence is that of Oxygen-dependent coproporphyrinogen-III oxidase from Shewanella baltica (strain OS155 / ATCC BAA-1091).